Here is a 156-residue protein sequence, read N- to C-terminus: MRRRKAPVREVLPDPIYGNKVITKFINSLMYDGKKSVATEIMYGALKAIEKKGGDVKGIDVFNDAIENVKPILEVKSRRVGGATYQVPVEVRPVRQQALAIRWLITYARKRSERTMIDKLANELLDAANSKGASFKKKEDTYKMAEANKAFAHYRW.

The protein belongs to the universal ribosomal protein uS7 family. In terms of assembly, part of the 30S ribosomal subunit. Contacts proteins S9 and S11.

One of the primary rRNA binding proteins, it binds directly to 16S rRNA where it nucleates assembly of the head domain of the 30S subunit. Is located at the subunit interface close to the decoding center, probably blocks exit of the E-site tRNA. The polypeptide is Small ribosomal subunit protein uS7 (Campylobacter curvus (strain 525.92)).